Here is a 244-residue protein sequence, read N- to C-terminus: NAD-dependent protein deacetylase (244 aa).

The region spanning 1-244 (MTGEQLAHWI…LSAVQRAVMP (244 aa)) is the Deacetylase sirtuin-type domain. 8 residues coordinate NAD(+): Ala22, Thr26, Phe33, Arg34, Gln103, Ile105, Asp106, and His121. Nicotinamide is bound at residue Phe33. The nicotinamide site is built by Ile105 and Asp106. Catalysis depends on His121, which acts as the Proton acceptor. Zn(2+) is bound by residues Cys129, Cys132, Cys150, and Cys152. NAD(+) is bound by residues Thr190, Ser191, Asn213, and Leu231.

The protein belongs to the sirtuin family. Class U subfamily. Zn(2+) serves as cofactor.

It localises to the cytoplasm. It catalyses the reaction N(6)-acetyl-L-lysyl-[protein] + NAD(+) + H2O = 2''-O-acetyl-ADP-D-ribose + nicotinamide + L-lysyl-[protein]. Functionally, NAD-dependent protein deacetylase which modulates the activities of several enzymes which are inactive in their acetylated form. The protein is NAD-dependent protein deacetylase of Cutibacterium acnes (strain DSM 16379 / KPA171202) (Propionibacterium acnes).